The following is a 648-amino-acid chain: Macrolide export ATP-binding/permease protein MacB (648 aa).

In terms of domain architecture, ABC transporter spans 5-243 (LELKDIRRSY…AGGTEPVVNT (239 aa)). 41-48 (GASGSGKS) is a binding site for ATP. 4 helical membrane-spanning segments follow: residues 273 to 293 (LLTM…VVVG), 523 to 543 (LFLT…VMNI), 576 to 596 (AVLV…LIAF), and 600 to 620 (LFLP…AFLC).

The protein belongs to the ABC transporter superfamily. Macrolide exporter (TC 3.A.1.122) family. In terms of assembly, homodimer. Part of the tripartite efflux system MacAB-TolC, which is composed of an inner membrane transporter, MacB, a periplasmic membrane fusion protein, MacA, and an outer membrane component, TolC. The complex forms a large protein conduit and can translocate molecules across both the inner and outer membranes. Interacts with MacA.

It is found in the cell inner membrane. Functionally, part of the tripartite efflux system MacAB-TolC. MacB is a non-canonical ABC transporter that contains transmembrane domains (TMD), which form a pore in the inner membrane, and an ATP-binding domain (NBD), which is responsible for energy generation. Confers resistance against macrolides. The sequence is that of Macrolide export ATP-binding/permease protein MacB from Shigella flexneri.